A 1349-amino-acid chain; its full sequence is DNA-directed RNA polymerase subunit beta' (1349 aa).

Zn(2+) contacts are provided by C219, C293, C300, and C303. The segment at 1298–1349 (LDSPTLGESGFGSRRAERSVLDDEDELIADEVVDDDDFEEEEEDDEDDFDDE) is disordered. Residues 1319-1349 (DDEDELIADEVVDDDDFEEEEEDDEDDFDDE) show a composition bias toward acidic residues.

Belongs to the RNA polymerase beta' chain family. RpoC2 subfamily. In terms of assembly, in cyanobacteria the RNAP catalytic core is composed of 2 alpha, 1 beta, 1 beta', 1 gamma and 1 omega subunit. When a sigma factor is associated with the core the holoenzyme is formed, which can initiate transcription. Zn(2+) is required as a cofactor.

The catalysed reaction is RNA(n) + a ribonucleoside 5'-triphosphate = RNA(n+1) + diphosphate. DNA-dependent RNA polymerase catalyzes the transcription of DNA into RNA using the four ribonucleoside triphosphates as substrates. This Nostoc punctiforme (strain ATCC 29133 / PCC 73102) protein is DNA-directed RNA polymerase subunit beta'.